The primary structure comprises 588 residues: Adenine deaminase (588 aa).

It belongs to the metallo-dependent hydrolases superfamily. Adenine deaminase family. Mn(2+) is required as a cofactor.

The catalysed reaction is adenine + H2O + H(+) = hypoxanthine + NH4(+). This is Adenine deaminase from Desulforamulus reducens (strain ATCC BAA-1160 / DSM 100696 / MI-1) (Desulfotomaculum reducens).